A 236-amino-acid chain; its full sequence is tRNA (guanine-N(1)-)-methyltransferase (236 aa).

S-adenosyl-L-methionine-binding positions include Gly112 and 132-137 (VGDFIL).

This sequence belongs to the RNA methyltransferase TrmD family. Homodimer.

Its subcellular location is the cytoplasm. The enzyme catalyses guanosine(37) in tRNA + S-adenosyl-L-methionine = N(1)-methylguanosine(37) in tRNA + S-adenosyl-L-homocysteine + H(+). In terms of biological role, specifically methylates guanosine-37 in various tRNAs. This chain is tRNA (guanine-N(1)-)-methyltransferase, found in Campylobacter curvus (strain 525.92).